The chain runs to 580 residues: MNLFTEIRTLVTAELGAMTEAGDLPAGLDLSAVAVEPPRDPAHGDMSTNAAMVLAKPSGKPPRAIAEALATRLAADPRISSAEVAGPGFLNLRLRPAVWQGMVATILKAGDTYGRSTIGAGQKVNVEFVSANPTGPMHVGHVRGAVVGDALARLLAYAGWNVTREYYINDGGAQVDVLARSAFERYREAHGLEPEIREGLYPGDYLIPVGEALKAKYGDSLLDKGEQHWLTEVREFATEMMMQMIREDLAALGVEMDVYSSEKALYGTGKIEAALDRLKEMDLIYEGVLEPPKGKTPEDWEPREQTLFRSTAHGDDVDRPVKKSDGSWTYFAPDIAYHYDKVTRGFDQLIDIFGADHGGYVKRMKAAVAALSAGRVPLDIKLIQLVKLWKNGEPFKMSKRAGTYVTLRDVVEQVGTDVTRFVMLTRKNDATLDFDFDKVLEQSKENPVFYVQYANARINSVLRKAREQGMDVSDATLATADLDRLDHPAEIALIAKLAEWPRLVEIAARTNEPHRVAFYLHELASELHGLWNRGNDEAGLRFLQEDPVVSQAKIALARAVGVVICAGLGILGVTPVEEMR.

Residues 131–141 carry the 'HIGH' region motif; that stretch reads ANPTGPMHVGH.

The protein belongs to the class-I aminoacyl-tRNA synthetase family. Monomer.

Its subcellular location is the cytoplasm. The enzyme catalyses tRNA(Arg) + L-arginine + ATP = L-arginyl-tRNA(Arg) + AMP + diphosphate. The sequence is that of Arginine--tRNA ligase from Cereibacter sphaeroides (strain KD131 / KCTC 12085) (Rhodobacter sphaeroides).